Consider the following 131-residue polypeptide: DNA-directed RNA polymerase subunit omega (131 aa).

Belongs to the RNA polymerase subunit omega family. The RNAP catalytic core consists of 2 alpha, 1 beta, 1 beta' and 1 omega subunit. When a sigma factor is associated with the core the holoenzyme is formed, which can initiate transcription.

It carries out the reaction RNA(n) + a ribonucleoside 5'-triphosphate = RNA(n+1) + diphosphate. Functionally, promotes RNA polymerase assembly. Latches the N- and C-terminal regions of the beta' subunit thereby facilitating its interaction with the beta and alpha subunits. The protein is DNA-directed RNA polymerase subunit omega of Chelativorans sp. (strain BNC1).